The sequence spans 225 residues: UPF0700 transmembrane protein RA0705 (225 aa).

Helical transmembrane passes span 17-37, 66-86, 95-115, 117-137, 168-188, and 194-214; these read VGLA…AIGL, GLLL…GVMI, ALLF…QPEL, FVSL…IEGL, IIQI…AVLV, and LALW…FQIP.

Belongs to the UPF0700 family.

It is found in the cell membrane. The protein is UPF0700 transmembrane protein RA0705 of Rhizobium meliloti (strain 1021) (Ensifer meliloti).